Consider the following 410-residue polypeptide: Lipid droplet-regulating VLDL assembly factor AUP1 (410 aa).

At Met1 the chain carries N-acetylmethionine. The Cytoplasmic portion of the chain corresponds to 1 to 20 (MELPSGPGPERLFDSHRLPG). Ser5 carries the post-translational modification Phosphoserine. Residues 21 to 41 (DCFLLLVLLLYAPVGFCLLVL) lie within the membrane without spanning it. Residues 42–410 (RLFLGIHVFL…FTERRAQEAD (369 aa)) are Cytoplasmic-facing. The interval 255–295 (TGTRLTPADKAEHMKRQRHPRLRPQSAQSSFPPSPGPSPDV) is disordered. Residues Ser288 and Ser292 each carry the phosphoserine modification. Residues 296 to 338 (QLATLAQRVKEVLPHVPLGVIQRDLAKTGCVDLTITNLLEGAV) enclose the CUE domain. Positions 350 to 369 (QSLPTASASKFPSSGPVTPQ) are disordered. Ser363 carries the phosphoserine modification. The residue at position 367 (Thr367) is a Phosphothreonine.

This sequence belongs to the AUP1 family. As to quaternary structure, identified in a complex that contains SEL1L, OS9, FAF2/UBXD8, UBE2J1/UBC6E and AUP1. Interacts with the cytoplasmic tail of ITGA2B, ITGA1, ITGA2, ITGA5, ITGAV and ITGAM. Interacts (via C-terminus) with ubiquitin-conjugating enzyme UBE2G2; the interaction recruits UBE2G2 to lipid droplets. Interacts with ubiquitin ligases AMFR/gp78 and RNF139/TRC8; this promotes interaction of UBE2G2 with AMFR and RNF139. Interacts with apolipoprotein APOB. (Microbial infection) Interacts with Dengue virus NS4A; the interaction occurs in the presence of Dengue virus NS4B and induces lipophagy which facilitates production of virus progeny. In terms of processing, monoubiquitinated and diubiquitinated. (Microbial infection) Not ubiquitinated following Dengue virus infection. As to expression, detected in blood platelets and leukocytes (at protein level). Ubiquitous. Highly expressed in placenta, liver, kidney, skeletal muscle, heart and brain.

It localises to the endoplasmic reticulum membrane. It is found in the lipid droplet. Its subcellular location is the cytoplasmic vesicle. The protein localises to the autophagosome. In terms of biological role, plays a role in the translocation of terminally misfolded proteins from the endoplasmic reticulum lumen to the cytoplasm and their degradation by the proteasome. Plays a role in lipid droplet formation. Induces lipid droplet clustering. Recruits ubiquitin-conjugating enzyme UBE2G2 to lipid droplets which facilitates its interaction with ubiquitin ligases AMFR/gp78 and RNF139/TRC8, leading to sterol-induced ubiquitination of HMGCR and its subsequent proteasomal degradation. Also required for the degradation of INSIG1, SREBF1 and SREBF2. Plays a role in regulating assembly and secretion of very low density lipoprotein particles and stability of apolipoprotein APOB. Its function is as follows. (Microbial infection) Following Dengue virus infection, required for induction of lipophagy which facilitates production of virus progeny particles. The polypeptide is Lipid droplet-regulating VLDL assembly factor AUP1 (Homo sapiens (Human)).